A 344-amino-acid chain; its full sequence is DNA-directed RNA polymerase subunit alpha (344 aa).

The segment at 1–238 (MKVIKTAPLI…KQLGVFGEKP (238 aa)) is alpha N-terminal domain (alpha-NTD). Residues 253–344 (DAKDLSAKIE…EKLEDKGGND (92 aa)) form an alpha C-terminal domain (alpha-CTD) region.

Belongs to the RNA polymerase alpha chain family. Homodimer. The RNAP catalytic core consists of 2 alpha, 1 beta, 1 beta' and 1 omega subunit. When a sigma factor is associated with the core the holoenzyme is formed, which can initiate transcription.

It carries out the reaction RNA(n) + a ribonucleoside 5'-triphosphate = RNA(n+1) + diphosphate. DNA-dependent RNA polymerase catalyzes the transcription of DNA into RNA using the four ribonucleoside triphosphates as substrates. This is DNA-directed RNA polymerase subunit alpha from Helicobacter acinonychis (strain Sheeba).